Consider the following 856-residue polypeptide: Envelope glycoprotein gp150 (856 aa).

Residues Met1–Lys785 lie on the Extracellular side of the membrane. 17 N-linked (GlcNAc...) asparagine; by host glycosylation sites follow: Asn220, Asn258, Asn269, Asn274, Asn298, Asn330, Asn336, Asn342, Asn418, Asn422, Asn448, Asn481, Asn499, Asn518, Asn531, Asn548, and Asn551. The segment at Val616–Ile636 is fusion peptide. Residues His643–Ala693 adopt a coiled-coil conformation. The tract at residues Ile662–Lys680 is immunosuppression. N-linked (GlcNAc...) asparagine; by host glycosylation is found at Asn717, Asn721, Asn729, and Asn737. A coiled-coil region spans residues Tyr736–Asp772. Residues Gly786–Pro806 form a helical membrane-spanning segment. Topologically, residues Thr807–Glu856 are cytoplasmic.

As to quaternary structure, the mature envelope protein (Env) consists of a trimer of SU-TM heterodimers attached by noncovalent interactions or by a labile interchain disulfide bond. Specific enzymatic cleavages in vivo yield mature proteins. Envelope glycoproteins are synthesized as an inactive precursor that is N-glycosylated and processed likely by host cell furin or by a furin-like protease in the Golgi to yield the mature SU and TM proteins. The cleavage site between SU and TM requires the minimal sequence [KR]-X-[KR]-R.

It localises to the virion membrane. The protein resides in the host cell membrane. Functionally, the surface protein (SU) attaches the virus to the host cell by binding to its receptor. This interaction triggers the refolding of the transmembrane protein (TM) and is thought to activate its fusogenic potential by unmasking its fusion peptide. Fusion occurs at the host cell plasma membrane. Its function is as follows. The transmembrane protein (TM) acts as a class I viral fusion protein. Under the current model, the protein has at least 3 conformational states: pre-fusion native state, pre-hairpin intermediate state, and post-fusion hairpin state. During viral and target cell membrane fusion, the coiled coil regions (heptad repeats) assume a trimer-of-hairpins structure, positioning the fusion peptide in close proximity to the C-terminal region of the ectodomain. The formation of this structure appears to drive apposition and subsequent fusion of viral and target cell membranes. Membranes fusion leads to delivery of the nucleocapsid into the cytoplasm. This chain is Envelope glycoprotein gp150 (env), found in Felidae (cat family).